A 209-amino-acid chain; its full sequence is Large ribosomal subunit protein uL3 (209 aa).

Residues 126–148 (HGQSRGPMAHGSRYHRRPGSMGP) are disordered.

Belongs to the universal ribosomal protein uL3 family. In terms of assembly, part of the 50S ribosomal subunit. Forms a cluster with proteins L14 and L19.

Its function is as follows. One of the primary rRNA binding proteins, it binds directly near the 3'-end of the 23S rRNA, where it nucleates assembly of the 50S subunit. The protein is Large ribosomal subunit protein uL3 of Listeria monocytogenes serotype 4b (strain CLIP80459).